An 84-amino-acid chain; its full sequence is Small ribosomal subunit protein bS16 (84 aa).

It belongs to the bacterial ribosomal protein bS16 family.

This chain is Small ribosomal subunit protein bS16, found in Thioalkalivibrio sulfidiphilus (strain HL-EbGR7).